A 436-amino-acid polypeptide reads, in one-letter code: ATP-dependent protease ATPase subunit HslU (436 aa).

ATP contacts are provided by residues Ile18, 60–65, Asp250, Glu314, and Arg386; that span reads GVGKTE.

The protein belongs to the ClpX chaperone family. HslU subfamily. A double ring-shaped homohexamer of HslV is capped on each side by a ring-shaped HslU homohexamer. The assembly of the HslU/HslV complex is dependent on binding of ATP.

The protein resides in the cytoplasm. Functionally, ATPase subunit of a proteasome-like degradation complex; this subunit has chaperone activity. The binding of ATP and its subsequent hydrolysis by HslU are essential for unfolding of protein substrates subsequently hydrolyzed by HslV. HslU recognizes the N-terminal part of its protein substrates and unfolds these before they are guided to HslV for hydrolysis. This is ATP-dependent protease ATPase subunit HslU from Mesorhizobium japonicum (strain LMG 29417 / CECT 9101 / MAFF 303099) (Mesorhizobium loti (strain MAFF 303099)).